Consider the following 297-residue polypeptide: Formylmethanofuran--tetrahydromethanopterin formyltransferase (297 aa).

Belongs to the FTR family. Homotetramer.

It localises to the cytoplasm. The catalysed reaction is N-formylmethanofuran + 5,6,7,8-tetrahydromethanopterin + H(+) = N(5)-formyl-5,6,7,8-tetrahydromethanopterin + methanofuran. It participates in metabolic intermediate metabolism; lactate oxidation. Functionally, catalyzes the transfer of a formyl group from 5-formyl tetrahydromethanopterin (5-formyl-H(4)MPT) to methanofuran (MFR) to produce formylmethanofuran (formyl-MFR) and tetrahydromethanopterin (H(4)MPT). This is Formylmethanofuran--tetrahydromethanopterin formyltransferase from Archaeoglobus fulgidus (strain ATCC 49558 / DSM 4304 / JCM 9628 / NBRC 100126 / VC-16).